Here is a 667-residue protein sequence, read N- to C-terminus: WD40 repeat-containing protein DDB_G0271002 (667 aa).

WD repeat units lie at residues 165-204 and 210-249; these read NHGV…PQET and KHKH…LLRI. Positions 278–293 are enriched in low complexity; the sequence is SSNSRDNNNNNSNSNN. 3 disordered regions span residues 278–301, 316–345, and 389–440; these read SSNS…GIII, LVEN…DNDD, and DIIF…ATTT. The span at 325–345 shows a compositional bias: acidic residues; that stretch reads PMPEEEEEEEEEEVNQVDNDD. The segment covering 400 to 410 has biased composition (low complexity); that stretch reads NQHQQQQQQNQ. Over residues 411-428 the composition is skewed to acidic residues; that stretch reads EIEEEGQEGQEEQEDGTE. A compositionally biased stretch (low complexity) spans 429-440; it reads NENNQGTIATTT.

The polypeptide is WD40 repeat-containing protein DDB_G0271002 (Dictyostelium discoideum (Social amoeba)).